We begin with the raw amino-acid sequence, 330 residues long: MMGSLKIISPPPPATRFRQRVTANGDGFPTFLPKEIQNIKDPFARALAQRIVRIPVPLQMGNFRGSVMSSCIKPLVQLHDKSPVVLLHCFDSSCLEWRRTYPLLEQACLETWAIDVLGWGFSDLEKLPPCDAASKRHHLFELWKTYIKRPMILVGPSLGATVAVDFTATYPEAVDKLVLINANAYSEGTGRLKELPKSIAYAGVKLLKSFPLRLLANVLAFCSSPLSENIDWTNIGRLHCQMPWWEDAMVDFMISGGYNVASHIKHIDHKTLVVCSENDQIVSNQLSVKLLCELANAVLREVPDSGHLPHVENPKHIVKLISDFASGKLY.

Residues 84–315 form the AB hydrolase-1 domain; it reads VVLLHCFDSS…GHLPHVENPK (232 aa). The active-site Nucleophile is Ser-157. Active-site charge relay system residues include Asp-279 and His-307.

This sequence belongs to the AB hydrolase superfamily.

The protein localises to the plastid. It is found in the chloroplast envelope. Its function is as follows. Hydrolase involved in tocopherol (vitamin E) biosynthesis. Releases prenyl alcohols from chlorophyll biosynthetic intermediates, which are then converted to the corresponding diphosphates for tocopherol biosynthesis. Provides most of the phytol from chlorophyll for tocopherol biosynthesis in seeds. This Arabidopsis thaliana (Mouse-ear cress) protein is Alpha/beta hydrolase domain-containing protein VTE7.